The chain runs to 473 residues: Phosphatidylserine synthase 1 (473 aa).

At alanine 2 the chain carries N-acetylalanine. The Cytoplasmic segment spans residues 2–35 (ASCVGSRTLSKDDVNYKMHFRMINEQQVEDITID). Residues 36–56 (FFYRPHTITLLSFTIVSLMYF) form a helical membrane-spanning segment. At 57 to 72 (AFTRDDSVPEDNIWRG) the chain is on the lumenal side. Residues 73 to 93 (ILSVIFFFLIISVLAFPNGPF) form a helical membrane-spanning segment. The Cytoplasmic segment spans residues 94 to 102 (TRPHPALWR). A helical transmembrane segment spans residues 103–123 (MVFGLSVLYFLFLVFLLFLNF). Residues 124-186 (EQVKSLMYWL…AMKALLIRSY (63 aa)) lie on the Lumenal side of the membrane. Residues 187–207 (GLCWTISITWELTELFFMHLL) form a helical membrane-spanning segment. At 208–216 (PNFAECWWD) the chain is on the cytoplasmic side. Residues 217 to 237 (QVILDILLCNGGGIWLGMVVC) traverse the membrane as a helical segment. At 238-286 (RFLEMRTYHWASFKDIHTTTGKIKRAVLQFTPASWTYVRWFDPKSSFQR) the chain is on the lumenal side. A helical membrane pass occupies residues 287–307 (VAGIYLFMIIWQLTELNTFFL). Topologically, residues 308-319 (KHIFVFQASHPL) are cytoplasmic. A helical membrane pass occupies residues 320-342 (SWCRILFIGGITAPTVRQYYAYL). Over 343–355 (TDTQCKRVGTQCW) the chain is Lumenal. Residues 356 to 376 (VFGVIGFLEAIVCIKFGQDLF) traverse the membrane as a helical segment. The Cytoplasmic portion of the chain corresponds to 377–383 (SKTQILY). The chain crosses the membrane as a helical span at residues 384–404 (VVLWLLCVAFTTFLCLYGMVW). Residues 405–473 (YAEHYGHREK…SKVTNGVGKK (69 aa)) are Lumenal-facing. A phosphoserine mark is found at serine 417, serine 425, and serine 454. Residues 427–473 (DISWPHGKGSKGSEDGPHKHPGNSESHSSRRRNRHSKSKVTNGVGKK) form a disordered region. A compositionally biased stretch (basic residues) spans 455-464 (SRRRNRHSKS).

Belongs to the phosphatidyl serine synthase family.

The protein localises to the endoplasmic reticulum membrane. It carries out the reaction a 1,2-diacyl-sn-glycero-3-phosphoethanolamine + L-serine = a 1,2-diacyl-sn-glycero-3-phospho-L-serine + ethanolamine. The catalysed reaction is a 1,2-diacyl-sn-glycero-3-phosphocholine + L-serine = a 1,2-diacyl-sn-glycero-3-phospho-L-serine + choline. It functions in the pathway phospholipid metabolism; phosphatidylserine biosynthesis. Its function is as follows. Catalyzes a base-exchange reaction in which the polar head group of phosphatidylethanolamine (PE) or phosphatidylcholine (PC) is replaced by L-serine. Catalyzes mainly the conversion of phosphatidylcholine but also converts, in vitro and to a lesser extent, phosphatidylethanolamine. This Bos taurus (Bovine) protein is Phosphatidylserine synthase 1 (PTDSS1).